Consider the following 136-residue polypeptide: MTERTLVLIKPDGVQRRLIGEIISRIEAKGLAIVALELKNVGDDTARAHYAEHEGKPFFASLLEFITSGPVVAAVLEGPRAIAAFRQLAGGTDPVEKAIPGTIRGDLGLETQFNLVHGSDSPDSAAREIALWFPGL.

Residues Lys10, Phe58, Arg86, Thr92, Arg104, and Asn114 each contribute to the ATP site. The active-site Pros-phosphohistidine intermediate is the His117.

The protein belongs to the NDK family. As to quaternary structure, homotetramer. The cofactor is Mg(2+).

The protein localises to the cytoplasm. It catalyses the reaction a 2'-deoxyribonucleoside 5'-diphosphate + ATP = a 2'-deoxyribonucleoside 5'-triphosphate + ADP. The catalysed reaction is a ribonucleoside 5'-diphosphate + ATP = a ribonucleoside 5'-triphosphate + ADP. Its function is as follows. Major role in the synthesis of nucleoside triphosphates other than ATP. The ATP gamma phosphate is transferred to the NDP beta phosphate via a ping-pong mechanism, using a phosphorylated active-site intermediate. This chain is Nucleoside diphosphate kinase, found in Mycolicibacterium gilvum (strain PYR-GCK) (Mycobacterium gilvum (strain PYR-GCK)).